Consider the following 348-residue polypeptide: Uroporphyrinogen decarboxylase (348 aa).

Substrate contacts are provided by residues 24-28 (RQAGR), aspartate 73, tyrosine 150, serine 205, and histidine 324.

Belongs to the uroporphyrinogen decarboxylase family. Homodimer.

It is found in the cytoplasm. It carries out the reaction uroporphyrinogen III + 4 H(+) = coproporphyrinogen III + 4 CO2. It participates in porphyrin-containing compound metabolism; protoporphyrin-IX biosynthesis; coproporphyrinogen-III from 5-aminolevulinate: step 4/4. Its function is as follows. Catalyzes the decarboxylation of four acetate groups of uroporphyrinogen-III to yield coproporphyrinogen-III. The polypeptide is Uroporphyrinogen decarboxylase (Roseiflexus sp. (strain RS-1)).